Reading from the N-terminus, the 479-residue chain is Adenosylhomocysteinase (479 aa).

Positions 66, 142, and 203 each coordinate substrate. 204 to 206 is an NAD(+) binding site; it reads TTT. Residues Lys233 and Asp237 each contribute to the substrate site. NAD(+) is bound by residues Asn238, 267-272, Glu290, Asn325, 346-348, and Asn394; these read GYGDVG and IGH.

This sequence belongs to the adenosylhomocysteinase family. NAD(+) is required as a cofactor.

Its subcellular location is the cytoplasm. It carries out the reaction S-adenosyl-L-homocysteine + H2O = L-homocysteine + adenosine. It functions in the pathway amino-acid biosynthesis; L-homocysteine biosynthesis; L-homocysteine from S-adenosyl-L-homocysteine: step 1/1. May play a key role in the regulation of the intracellular concentration of adenosylhomocysteine. This chain is Adenosylhomocysteinase, found in Nitratidesulfovibrio vulgaris (strain ATCC 29579 / DSM 644 / CCUG 34227 / NCIMB 8303 / VKM B-1760 / Hildenborough) (Desulfovibrio vulgaris).